A 305-amino-acid polypeptide reads, in one-letter code: UDP-3-O-acyl-N-acetylglucosamine deacetylase (305 aa).

Zn(2+) contacts are provided by His-79, His-238, and Asp-242. His-265 serves as the catalytic Proton donor.

This sequence belongs to the LpxC family. Requires Zn(2+) as cofactor.

The enzyme catalyses a UDP-3-O-[(3R)-3-hydroxyacyl]-N-acetyl-alpha-D-glucosamine + H2O = a UDP-3-O-[(3R)-3-hydroxyacyl]-alpha-D-glucosamine + acetate. Its pathway is glycolipid biosynthesis; lipid IV(A) biosynthesis; lipid IV(A) from (3R)-3-hydroxytetradecanoyl-[acyl-carrier-protein] and UDP-N-acetyl-alpha-D-glucosamine: step 2/6. Catalyzes the hydrolysis of UDP-3-O-myristoyl-N-acetylglucosamine to form UDP-3-O-myristoylglucosamine and acetate, the committed step in lipid A biosynthesis. The polypeptide is UDP-3-O-acyl-N-acetylglucosamine deacetylase (Escherichia fergusonii (strain ATCC 35469 / DSM 13698 / CCUG 18766 / IAM 14443 / JCM 21226 / LMG 7866 / NBRC 102419 / NCTC 12128 / CDC 0568-73)).